Here is a 121-residue protein sequence, read N- to C-terminus: uncharacterized protein (121 aa).

2 helical membrane-spanning segments follow: residues 26–46 and 72–92; these read FIALFDFPLLFIYFPFLILVL and AFLTHEECGLVLQYIYYWLGL.

The protein resides in the membrane. This is an uncharacterized protein from Saccharomyces cerevisiae (strain ATCC 204508 / S288c) (Baker's yeast).